Here is a 312-residue protein sequence, read N- to C-terminus: DNA-directed RNA polymerase subunit alpha (312 aa).

An alpha N-terminal domain (alpha-NTD) region spans residues 1–229 (MLQYQIDRID…ELFQPLATVT (229 aa)). The segment at 241 to 312 (SPEAQIPLEE…ISIPQSRTSV (72 aa)) is alpha C-terminal domain (alpha-CTD).

This sequence belongs to the RNA polymerase alpha chain family. In cyanobacteria the RNAP catalytic core is composed of 2 alpha, 1 beta, 1 beta', 1 gamma and 1 omega subunit. When a sigma factor is associated with the core the holoenzyme is formed, which can initiate transcription.

It catalyses the reaction RNA(n) + a ribonucleoside 5'-triphosphate = RNA(n+1) + diphosphate. Functionally, DNA-dependent RNA polymerase catalyzes the transcription of DNA into RNA using the four ribonucleoside triphosphates as substrates. This chain is DNA-directed RNA polymerase subunit alpha, found in Prochlorococcus marinus (strain MIT 9215).